A 153-amino-acid polypeptide reads, in one-letter code: ATP synthase subunit b' (153 aa).

The chain crosses the membrane as a helical span at residues 23–40 (LMAIQVVALTYILNSLFF).

Belongs to the ATPase B chain family. As to quaternary structure, F-type ATPases have 2 components, F(1) - the catalytic core - and F(0) - the membrane proton channel. F(1) has five subunits: alpha(3), beta(3), gamma(1), delta(1), epsilon(1). F(0) has four main subunits: a(1), b(1), b'(1) and c(10-14). The alpha and beta chains form an alternating ring which encloses part of the gamma chain. F(1) is attached to F(0) by a central stalk formed by the gamma and epsilon chains, while a peripheral stalk is formed by the delta, b and b' chains.

It localises to the cellular thylakoid membrane. Its function is as follows. F(1)F(0) ATP synthase produces ATP from ADP in the presence of a proton or sodium gradient. F-type ATPases consist of two structural domains, F(1) containing the extramembraneous catalytic core and F(0) containing the membrane proton channel, linked together by a central stalk and a peripheral stalk. During catalysis, ATP synthesis in the catalytic domain of F(1) is coupled via a rotary mechanism of the central stalk subunits to proton translocation. Component of the F(0) channel, it forms part of the peripheral stalk, linking F(1) to F(0). The b'-subunit is a diverged and duplicated form of b found in plants and photosynthetic bacteria. The protein is ATP synthase subunit b' of Prochlorococcus marinus (strain AS9601).